Here is a 212-residue protein sequence, read N- to C-terminus: ATP phosphoribosyltransferase (212 aa).

This sequence belongs to the ATP phosphoribosyltransferase family. Short subfamily. As to quaternary structure, heteromultimer composed of HisG and HisZ subunits.

The protein localises to the cytoplasm. The catalysed reaction is 1-(5-phospho-beta-D-ribosyl)-ATP + diphosphate = 5-phospho-alpha-D-ribose 1-diphosphate + ATP. Its pathway is amino-acid biosynthesis; L-histidine biosynthesis; L-histidine from 5-phospho-alpha-D-ribose 1-diphosphate: step 1/9. Its function is as follows. Catalyzes the condensation of ATP and 5-phosphoribose 1-diphosphate to form N'-(5'-phosphoribosyl)-ATP (PR-ATP). Has a crucial role in the pathway because the rate of histidine biosynthesis seems to be controlled primarily by regulation of HisG enzymatic activity. The protein is ATP phosphoribosyltransferase of Clostridium novyi (strain NT).